A 585-amino-acid polypeptide reads, in one-letter code: GRR1-like protein 1 (585 aa).

The F-box domain occupies 1-48 (MGLRFPPKVLEHILSFIDSNEDRNSVSLVCKSWFETERKTRKRVFVGN). 1D-myo-inositol hexakisphosphate is bound at residue K70. Residues 77–78 (DY) form an interaction with auxin-responsive proteins region. Residues 109–110 (KR) and R340 contribute to the 1D-myo-inositol hexakisphosphate site. An interaction with auxin-responsive proteins region spans residues 343 to 348 (PSEPDL). 397 to 399 (CFR) contributes to the 1D-myo-inositol hexakisphosphate binding site. Residues 401–405 (CVIEP) are interaction with auxin-responsive proteins. R432 provides a ligand contact to 1D-myo-inositol hexakisphosphate. Positions 460–461 (AF) are interaction with auxin-responsive proteins. Residues 480–481 (KK) and R505 contribute to the 1D-myo-inositol hexakisphosphate site.

Part of a SCF (SKP1-cullin-F-box) protein ligase complex. Interacts with CUL1, SKP1A/ASK1 and SKP1B/ASK2. Interacts with Aux/IAA proteins (IAA7 and IAA12) in an auxin-dependent manner. As to expression, ubiquitous.

Its subcellular location is the nucleus. The protein operates within protein modification; protein ubiquitination. In terms of biological role, component of SCF(ASK-cullin-F-box) E3 ubiquitin ligase complexes, which may mediate the ubiquitination and subsequent proteasomal degradation of target proteins. Auxin receptor that mediates Aux/IAA proteins proteasomal degradation and auxin-regulated transcription. Involved in embryogenesis regulation by auxin. Confers sensitivity to the virulent bacterial pathogen P.syringae. Mediates glucose repression in yeast. The protein is GRR1-like protein 1 (GRH1) of Arabidopsis thaliana (Mouse-ear cress).